A 245-amino-acid chain; its full sequence is MFKAAINAELLKDAVAALAVIVDEVRFKINPEGISVKAVDPANVAMGIFELGSSAFDEYNADECEIGVDLNKITDLLGIADKNDTVRMELEEENHKLLIDVGGLSYTLSLLDPSTIRAEPRVPQLELPAKVVLNGADLRRAVKAAEKISDHMLMGVSDDTFYMEAKGDTDQVRLEMGRDQLIDLKAGEACSLFSLDYLTDIVKPTNKVNEVTLSLGKDFPILIDFEIANGSGRISYLLAPRIESD.

Belongs to the PCNA family. In terms of assembly, homotrimer. The subunits circularize to form a toroid; DNA passes through its center. Replication factor C (RFC) is required to load the toroid on the DNA.

Functionally, sliding clamp subunit that acts as a moving platform for DNA processing. Responsible for tethering the catalytic subunit of DNA polymerase and other proteins to DNA during high-speed replication. In Methanosarcina barkeri (strain Fusaro / DSM 804), this protein is DNA polymerase sliding clamp.